Reading from the N-terminus, the 511-residue chain is MDKILILDFGGQYTQLIARRIRDLNVYSEIVDYDISIEEIIKKNPKGIILSGGYDSVYGDRSIKPNKGIWDLNIPILGICYGFQVMMQENGGQVENDKDSEEYGSTDIRLTTNELFENIELDNNCWMSHSDSVIFLPKGFKVIASTNKCLVASACNREKKFYGVQFHPEVTQTTFGNQLLQNFVYSICDVAGDWEPKNIKLEKIEEIKSIVKDDYVLCAISGGVDSLVAAVLTAQAIGDKLYCVFVDHGLLRKNESQEVCALLKKLIGKNIFLVDQKQLFLSKLKGVVDPEQKRKIIGKTFIEVFEKVANKINVPFKYLLQGTIYPDIVESGSKFSKTIKSHHNVGGLPERLQFELLEPLKYLFKDEVRKLGLSLDIPYQNVYRQPFPGPGLAVRVLGEITEDKLEIVREADFLFRSYIDQLYKNSEHKPWQYFTVLTNSKSVGVVGDNRSYGYTLALRAVDSMDAMSAKWYKIPLEHLEKISSIICNKVKNISRVVYDITNKPPGTIEWE.

The Glutamine amidotransferase type-1 domain maps to 3–193 (KILILDFGGQ…VYSICDVAGD (191 aa)). Catalysis depends on Cys80, which acts as the Nucleophile. Residues His167 and Glu169 contribute to the active site. Residues 194-384 (WEPKNIKLEK…LDIPYQNVYR (191 aa)) form the GMPS ATP-PPase domain. Position 221–227 (221–227 (SGGVDSL)) interacts with ATP.

As to quaternary structure, homodimer.

The catalysed reaction is XMP + L-glutamine + ATP + H2O = GMP + L-glutamate + AMP + diphosphate + 2 H(+). Its pathway is purine metabolism; GMP biosynthesis; GMP from XMP (L-Gln route): step 1/1. Catalyzes the synthesis of GMP from XMP. The sequence is that of GMP synthase [glutamine-hydrolyzing] from Malacoplasma penetrans (strain HF-2) (Mycoplasma penetrans).